Reading from the N-terminus, the 214-residue chain is Orotate phosphoribosyltransferase (214 aa).

Residue Lys26 coordinates 5-phospho-alpha-D-ribose 1-diphosphate. Orotate is bound at residue Phe34–Phe35. Residues Tyr72–Lys73, Arg99, Lys100, Lys103, His105, and Asp124–Ala132 contribute to the 5-phospho-alpha-D-ribose 1-diphosphate site. Orotate contacts are provided by Thr128 and Arg157.

Belongs to the purine/pyrimidine phosphoribosyltransferase family. PyrE subfamily. In terms of assembly, homodimer. The cofactor is Mg(2+).

It carries out the reaction orotidine 5'-phosphate + diphosphate = orotate + 5-phospho-alpha-D-ribose 1-diphosphate. It participates in pyrimidine metabolism; UMP biosynthesis via de novo pathway; UMP from orotate: step 1/2. Catalyzes the transfer of a ribosyl phosphate group from 5-phosphoribose 1-diphosphate to orotate, leading to the formation of orotidine monophosphate (OMP). The sequence is that of Orotate phosphoribosyltransferase from Pseudomonas fluorescens (strain SBW25).